Here is a 140-residue protein sequence, read N- to C-terminus: MPPKAAEKKPTTGGKAPAGKAPAEKKEAGKKTAAAASGDKKKRGKTRKETYSSYIYKVLKQVHPDTGISTRAMSILNSFVNDIFERVATEASKLAAYNKKSTISSREIQTSVRLILPGELAKHAVSEGTKAVTKYSSSAK.

Over residues 1 to 10 the composition is skewed to basic and acidic residues; it reads MPPKAAEKKP. The tract at residues 1–48 is disordered; that stretch reads MPPKAAEKKPTTGGKAPAGKAPAEKKEAGKKTAAAASGDKKKRGKTRK. An N6-acetyllysine; alternate mark is found at K8 and K9. Residues K8 and K9 each participate in a glycyl lysine isopeptide (Lys-Gly) (interchain with G-Cter in SUMO); alternate cross-link. Residues 11–21 show a composition bias toward low complexity; it reads TTGGKAPAGKA. The residue at position 15 (K15) is an N6-acetyllysine. Position 25 is an N6-acetyllysine; alternate (K25). Residue K25 forms a Glycyl lysine isopeptide (Lys-Gly) (interchain with G-Cter in SUMO); alternate linkage. Residue K26 forms a Glycyl lysine isopeptide (Lys-Gly) (interchain with G-Cter in SUMO) linkage. K134 participates in a covalent cross-link: Glycyl lysine isopeptide (Lys-Gly) (interchain with G-Cter in ubiquitin).

It belongs to the histone H2B family. In terms of assembly, the nucleosome is a histone octamer containing two molecules each of H2A, H2B, H3 and H4 assembled in one H3-H4 heterotetramer and two H2A-H2B heterodimers. The octamer wraps approximately 147 bp of DNA. In terms of processing, monoubiquitinated by the ubc2-bre1 complex to form H2BK123ub1. H2BK123ub1 gives a specific tag for epigenetic transcriptional activation and is also prerequisite for H3K4me and H3K79me formation. H2BK123ub1 also modulates the formation of double-strand breaks during meiosis and is a prerequisite for DNA-damage checkpoint activation. Post-translationally, acetylated by gcn5 to form H2BK11ac and H2BK16ac. H2BK16ac can also be formed by esa1. Acetylation of N-terminal lysines and particularly formation of H2BK11acK16ac has a positive effect on transcription. Sumoylation to form H2BK6su or H2BK7su, and probably also H2BK16su or H2BK17su, occurs preferentially near the telomeres and represses gene transcription.

The protein localises to the nucleus. The protein resides in the chromosome. Functionally, core component of nucleosome. Nucleosomes wrap and compact DNA into chromatin, limiting DNA accessibility to the cellular machineries which require DNA as a template. Histones thereby play a central role in transcription regulation, DNA repair, DNA replication and chromosomal stability. DNA accessibility is regulated via a complex set of post-translational modifications of histones, also called histone code, and nucleosome remodeling. The chain is Histone H2B (htb1) from Aspergillus terreus (strain NIH 2624 / FGSC A1156).